Consider the following 311-residue polypeptide: 4-hydroxy-3-methylbut-2-enyl diphosphate reductase (311 aa).

C12 contributes to the [4Fe-4S] cluster binding site. (2E)-4-hydroxy-3-methylbut-2-enyl diphosphate is bound by residues H41 and H74. H41 and H74 together coordinate dimethylallyl diphosphate. 2 residues coordinate isopentenyl diphosphate: H41 and H74. Residue C96 coordinates [4Fe-4S] cluster. H124 is a binding site for (2E)-4-hydroxy-3-methylbut-2-enyl diphosphate. Residue H124 participates in dimethylallyl diphosphate binding. An isopentenyl diphosphate-binding site is contributed by H124. The Proton donor role is filled by E126. A (2E)-4-hydroxy-3-methylbut-2-enyl diphosphate-binding site is contributed by T168. C198 provides a ligand contact to [4Fe-4S] cluster. Residues S226, S227, N228, and S270 each coordinate (2E)-4-hydroxy-3-methylbut-2-enyl diphosphate. S226, S227, N228, and S270 together coordinate dimethylallyl diphosphate. Isopentenyl diphosphate contacts are provided by S226, S227, N228, and S270.

This sequence belongs to the IspH family. [4Fe-4S] cluster is required as a cofactor.

The catalysed reaction is isopentenyl diphosphate + 2 oxidized [2Fe-2S]-[ferredoxin] + H2O = (2E)-4-hydroxy-3-methylbut-2-enyl diphosphate + 2 reduced [2Fe-2S]-[ferredoxin] + 2 H(+). It catalyses the reaction dimethylallyl diphosphate + 2 oxidized [2Fe-2S]-[ferredoxin] + H2O = (2E)-4-hydroxy-3-methylbut-2-enyl diphosphate + 2 reduced [2Fe-2S]-[ferredoxin] + 2 H(+). It functions in the pathway isoprenoid biosynthesis; dimethylallyl diphosphate biosynthesis; dimethylallyl diphosphate from (2E)-4-hydroxy-3-methylbutenyl diphosphate: step 1/1. Its pathway is isoprenoid biosynthesis; isopentenyl diphosphate biosynthesis via DXP pathway; isopentenyl diphosphate from 1-deoxy-D-xylulose 5-phosphate: step 6/6. In terms of biological role, catalyzes the conversion of 1-hydroxy-2-methyl-2-(E)-butenyl 4-diphosphate (HMBPP) into a mixture of isopentenyl diphosphate (IPP) and dimethylallyl diphosphate (DMAPP). Acts in the terminal step of the DOXP/MEP pathway for isoprenoid precursor biosynthesis. This chain is 4-hydroxy-3-methylbut-2-enyl diphosphate reductase, found in Alcanivorax borkumensis (strain ATCC 700651 / DSM 11573 / NCIMB 13689 / SK2).